The chain runs to 181 residues: Shikimate kinase (181 aa).

17–22 (GAGKTT) contributes to the ATP binding site. A Mg(2+)-binding site is contributed by Thr-21. Residues Asp-39, Arg-63, and Gly-85 each coordinate substrate. Arg-122 serves as a coordination point for ATP. Arg-141 provides a ligand contact to substrate.

It belongs to the shikimate kinase family. As to quaternary structure, monomer. It depends on Mg(2+) as a cofactor.

Its subcellular location is the cytoplasm. The catalysed reaction is shikimate + ATP = 3-phosphoshikimate + ADP + H(+). The protein operates within metabolic intermediate biosynthesis; chorismate biosynthesis; chorismate from D-erythrose 4-phosphate and phosphoenolpyruvate: step 5/7. Catalyzes the specific phosphorylation of the 3-hydroxyl group of shikimic acid using ATP as a cosubstrate. This chain is Shikimate kinase, found in Nostoc sp. (strain PCC 7120 / SAG 25.82 / UTEX 2576).